Here is a 449-residue protein sequence, read N- to C-terminus: Tubulin alpha-2 chain (449 aa).

Gln11 contributes to the GTP binding site. An N6-acetyllysine modification is found at Lys40. The GTP site is built by Ser140, Gly144, Thr145, Thr179, Asn206, and Asn228. Residue Glu254 is part of the active site.

The protein belongs to the tubulin family. As to quaternary structure, dimer of alpha and beta chains. A typical microtubule is a hollow water-filled tube with an outer diameter of 25 nm and an inner diameter of 15 nM. Alpha-beta heterodimers associate head-to-tail to form protofilaments running lengthwise along the microtubule wall with the beta-tubulin subunit facing the microtubule plus end conferring a structural polarity. Microtubules usually have 13 protofilaments but different protofilament numbers can be found in some organisms and specialized cells. In terms of processing, acetylation of alpha chains at Lys-40 stabilizes microtubules and affects affinity and processivity of microtubule motors. This modification has a role in multiple cellular functions, ranging from cell motility, cell cycle progression or cell differentiation to intracellular trafficking and signaling.

Its subcellular location is the cytoplasm. The protein resides in the cytoskeleton. It catalyses the reaction GTP + H2O = GDP + phosphate + H(+). Its function is as follows. Tubulin is the major constituent of microtubules, a cylinder consisting of laterally associated linear protofilaments composed of alpha- and beta-tubulin heterodimers. Microtubules grow by the addition of GTP-tubulin dimers to the microtubule end, where a stabilizing cap forms. Below the cap, tubulin dimers are in GDP-bound state, owing to GTPase activity of alpha-tubulin. This is Tubulin alpha-2 chain from Stylonychia lemnae (Ciliate).